The primary structure comprises 221 residues: Oligoribonuclease (221 aa).

One can recognise an Exonuclease domain in the interval 21 to 186 (LVWVDLEMTG…ADIVESIREL (166 aa)). The active site involves Y143.

Belongs to the oligoribonuclease family.

It is found in the cytoplasm. Functionally, 3'-to-5' exoribonuclease specific for small oligoribonucleotides. This is Oligoribonuclease from Corynebacterium efficiens (strain DSM 44549 / YS-314 / AJ 12310 / JCM 11189 / NBRC 100395).